The primary structure comprises 666 residues: Putative L-type lectin-domain containing receptor kinase V.1 (666 aa).

Residues 1–18 (MVLLLFLVLFFVPESVVC) form the signal peptide. Over 19–289 (QRPNPNGVEF…WIQSPNGILT (271 aa)) the chain is Extracellular. A legume-lectin like region spans residues 27–257 (EFNTSGNMYT…SHYILGWTFK (231 aa)). Residues Asn-29, Asn-74, Asn-123, Asn-176, Asn-204, and Asn-259 are each glycosylated (N-linked (GlcNAc...) asparagine). A helical membrane pass occupies residues 290–310 (ISLTVSGVIILIILSLSLWLF). Residues 311 to 666 (LKRKKLLEVL…FTESFVSHGR (356 aa)) lie on the Cytoplasmic side of the membrane. Residues 344–625 (FKDTEVLGKG…SVAQLPHNLL (282 aa)) form the Protein kinase domain. Residues 350 to 358 (LGKGGFGKV) and Lys-373 each bind ATP. Catalysis depends on Asp-469, which acts as the Proton acceptor.

The protein in the C-terminal section; belongs to the protein kinase superfamily. Ser/Thr protein kinase family. In the N-terminal section; belongs to the leguminous lectin family.

The protein localises to the cell membrane. The enzyme catalyses L-seryl-[protein] + ATP = O-phospho-L-seryl-[protein] + ADP + H(+). The catalysed reaction is L-threonyl-[protein] + ATP = O-phospho-L-threonyl-[protein] + ADP + H(+). This Arabidopsis thaliana (Mouse-ear cress) protein is Putative L-type lectin-domain containing receptor kinase V.1 (LECRK51).